Here is a 301-residue protein sequence, read N- to C-terminus: Probable alpha-L-glutamate ligase (301 aa).

Residues 104 to 287 (LQFLSRKGID…IAGMIIEFIE (184 aa)) enclose the ATP-grasp domain. ATP is bound by residues K141, 178 to 179 (EF), D187, and 211 to 213 (RSN). 3 residues coordinate Mg(2+): D248, E260, and N262. D248, E260, and N262 together coordinate Mn(2+).

The protein belongs to the RimK family. The cofactor is Mg(2+). Requires Mn(2+) as cofactor.

This Coxiella burnetii (strain CbuK_Q154) (Coxiella burnetii (strain Q154)) protein is Probable alpha-L-glutamate ligase.